The following is a 463-amino-acid chain: Phosphomannomutase/phosphoglucomutase (463 aa).

Ser108 functions as the Phosphoserine intermediate in the catalytic mechanism. Mg(2+) is bound by residues Ser108, Asp242, Asp244, and Asp246. Substrate is bound by residues Glu325, Ser327, and His329.

Belongs to the phosphohexose mutase family. In terms of assembly, monomer. The cofactor is Mg(2+).

It carries out the reaction alpha-D-mannose 1-phosphate = D-mannose 6-phosphate. It catalyses the reaction alpha-D-glucose 1-phosphate = alpha-D-glucose 6-phosphate. Its pathway is nucleotide-sugar biosynthesis; GDP-alpha-D-mannose biosynthesis; alpha-D-mannose 1-phosphate from D-fructose 6-phosphate: step 2/2. It functions in the pathway bacterial outer membrane biogenesis; lipopolysaccharide biosynthesis. Its function is as follows. The phosphomannomutase activity produces a precursor for alginate polymerization. The alginate layer causes a mucoid phenotype and provides a protective barrier against host immune defenses and antibiotics. Also involved in core-LPS biosynthesis due to its phosphoglucomutase activity. Essential for biofilm production. This Pseudomonas putida (strain ATCC 47054 / DSM 6125 / CFBP 8728 / NCIMB 11950 / KT2440) protein is Phosphomannomutase/phosphoglucomutase (algC).